Reading from the N-terminus, the 339-residue chain is Photosystem II assembly lipoprotein Ycf48 (339 aa).

The first 23 residues, methionine 1–glycine 23, serve as a signal peptide directing secretion. The N-palmitoyl cysteine moiety is linked to residue cysteine 24. A lipid anchor (S-diacylglycerol cysteine) is attached at cysteine 24.

This sequence belongs to the Ycf48 family. Part of early PSII assembly complexes which includes D1 (psbA) and PsbI; not found in mature PSII. Binds to the lumenal side of PSII complexes. Interacts with YidC.

It is found in the cellular thylakoid membrane. A factor required for optimal assembly of photosystem II (PSII), acting in the early stages of PSII assembly. Also plays a role in replacement of photodamaged D1 (psbA). Assists YidC in synthesis of chlorophyll-binding proteins. This is Photosystem II assembly lipoprotein Ycf48 from Prochlorococcus marinus (strain SARG / CCMP1375 / SS120).